A 413-amino-acid polypeptide reads, in one-letter code: S-adenosylmethionine synthase (413 aa).

ATP is bound at residue His-15. Residue Asp-17 coordinates Mg(2+). Glu-43 lines the K(+) pocket. Glu-56 and Gln-100 together coordinate L-methionine. The segment at 100–110 is flexible loop; the sequence is QSPDISQGVNE. Residues 171 to 173, 248 to 249, Asp-257, 263 to 264, Ala-280, and Lys-284 contribute to the ATP site; these read DGK, KF, and RK. Asp-257 is a binding site for L-methionine. Lys-288 contributes to the L-methionine binding site.

It belongs to the AdoMet synthase family. Homotetramer; dimer of dimers. Mg(2+) serves as cofactor. The cofactor is K(+).

It is found in the cytoplasm. The catalysed reaction is L-methionine + ATP + H2O = S-adenosyl-L-methionine + phosphate + diphosphate. Its pathway is amino-acid biosynthesis; S-adenosyl-L-methionine biosynthesis; S-adenosyl-L-methionine from L-methionine: step 1/1. Catalyzes the formation of S-adenosylmethionine (AdoMet) from methionine and ATP. The overall synthetic reaction is composed of two sequential steps, AdoMet formation and the subsequent tripolyphosphate hydrolysis which occurs prior to release of AdoMet from the enzyme. The protein is S-adenosylmethionine synthase of Prochlorococcus marinus (strain MIT 9215).